Here is a 1869-residue protein sequence, read N- to C-terminus: Chitin synthase 6 (1869 aa).

Residues 1-23 (MAMNLPPLAGSGGAHTQPSLPAL) form a disordered region. The Myosin motor domain maps to 1-778 (MAMNLPPLAG…EIAHLSEASL (778 aa)). 104 to 111 (GESGSGKS) is a binding site for ATP. 4 N-linked (GlcNAc...) asparagine glycosylation sites follow: N123, N417, N426, and N557. Disordered stretches follow at residues 593–612 (KPMR…ARNQ) and 620–640 (AEEE…AAKA). Low complexity predominate over residues 629–640 (ENNSQAGGAAKA). N-linked (GlcNAc...) asparagine glycosylation is found at N630 and N657. The actin-binding stretch occupies residues 655-679 (LDNVTKAVADPSTNSYFVFCLKPND). 2 helical membrane passes run 886-906 (WLFM…RFIG) and 925-945 (LIIW…PMLI). The Cytochrome b5 heme-binding domain occupies 949–1010 (QHVYSAAELS…YAGKDATSLF (62 aa)). N-linked (GlcNAc...) asparagine glycans are attached at residues N1037, N1062, and N1165. The chain crosses the membrane as a helical span at residues 1201–1221 (LVLAISIMLVTIIAFKFFAAL). 2 N-linked (GlcNAc...) asparagine glycosylation sites follow: N1458 and N1564. 3 helical membrane passes run 1596–1616 (LSTV…VMVI), 1622–1642 (VPVT…IIFI), and 1649–1669 (MIGW…GLPL). Residue N1778 is glycosylated (N-linked (GlcNAc...) asparagine). In terms of domain architecture, DEK-C spans 1811–1866 (LPSDDALLAEIREILRTADLMTVTKKGIKQELERRFGVPLDAKRAYINSATEALLS).

The protein in the N-terminal section; belongs to the TRAFAC class myosin-kinesin ATPase superfamily. Myosin family. In the C-terminal section; belongs to the chitin synthase family. Class V subfamily.

It localises to the cell membrane. The catalysed reaction is [(1-&gt;4)-N-acetyl-beta-D-glucosaminyl](n) + UDP-N-acetyl-alpha-D-glucosamine = [(1-&gt;4)-N-acetyl-beta-D-glucosaminyl](n+1) + UDP + H(+). Polymerizes chitin, a structural polymer of the cell wall and septum, by transferring the sugar moiety of UDP-GlcNAc to the non-reducing end of the growing chitin polymer. Plays a role in cell wall integrity and is involved in tolerance to hyperosmotic conditions. Required to successfully penetrate the host plants and thus plays a key role in pathogenicity. This is Chitin synthase 6 from Verticillium dahliae (strain VdLs.17 / ATCC MYA-4575 / FGSC 10137) (Verticillium wilt).